A 213-amino-acid polypeptide reads, in one-letter code: Putative cytochrome c-type biogenesis protein HI_1454 (213 aa).

A run of 6 helical transmembrane segments spans residues 15-35, 46-66, 77-97, 118-138, 154-174, and 192-212; these read GLAS…FGIL, FLFI…FGFL, IIAG…FKIG, AFVL…PILA, ASMM…FSFF, and FKIG…TNNF.

The protein belongs to the DsbD family.

Its subcellular location is the cell membrane. Functionally, could be involved in cytochrome c synthesis. The sequence is that of Putative cytochrome c-type biogenesis protein HI_1454 from Haemophilus influenzae (strain ATCC 51907 / DSM 11121 / KW20 / Rd).